The following is a 330-amino-acid chain: Malate dehydrogenase (330 aa).

12-18 (GAAGQIG) is a binding site for NAD(+). Residues Arg93 and Arg99 each coordinate substrate. Residues Asn106, Gln113, and 130 to 132 (VGN) contribute to the NAD(+) site. The substrate site is built by Asn132 and Arg163. His188 (proton acceptor) is an active-site residue.

The protein belongs to the LDH/MDH superfamily. MDH type 2 family.

It catalyses the reaction (S)-malate + NAD(+) = oxaloacetate + NADH + H(+). Catalyzes the reversible oxidation of malate to oxaloacetate. In Thermobifida fusca (strain YX), this protein is Malate dehydrogenase.